The following is a 112-amino-acid chain: MQDTGSVVPLHWFGFGYAALVASGGIIGYAKAGSVPSLAAGLLFGSLASLGAYQLSQDPRNVWVFLATSGTLAGIMGMRFYHSGKFMPAGLIAGASLLMVAKVGVSMFNRPH.

4 helical membrane-spanning segments follow: residues 7 to 27, 32 to 52, 62 to 82, and 86 to 106; these read VVPL…GGII, AGSV…SLGA, VWVF…RFYH, and FMPA…VGVS.

It belongs to the TMEM14 family.

The protein resides in the mitochondrion membrane. Required for normal heme biosynthesis. The polypeptide is Transmembrane protein 14C (TMEM14C) (Pongo abelii (Sumatran orangutan)).